We begin with the raw amino-acid sequence, 147 residues long: Cystatin-9-like (147 aa).

Residues 1 to 28 (MLGLPWKGGLSWALLLLLLGSQILLIYA) form the signal peptide. A disulfide bridge links Cys98 with Cys108. Asn117 and Asn139 each carry an N-linked (GlcNAc...) asparagine glycan. Cys122 and Cys142 are oxidised to a cystine.

It belongs to the cystatin family. In terms of tissue distribution, specifically expressed in testis.

It localises to the secreted. The polypeptide is Cystatin-9-like (CST9L) (Homo sapiens (Human)).